A 426-amino-acid polypeptide reads, in one-letter code: Putative phosphate permease CPn_0680/CP_0067/CPj0680/CpB0707 (426 aa).

Transmembrane regions (helical) follow at residues 1-21 (MLPL…NIGA), 42-62 (AVVI…DRVA), 87-107 (TAAL…GWPV), 112-132 (SIVG…IIYW), 137-157 (IILI…YLIF), 180-200 (FLAA…GVIL), 207-227 (WAVS…FYYV), 260-280 (LVVE…MAFA), 313-333 (LMAF…WRVI), 364-384 (ILGL…GIGL), and 399-419 (IVLS…LFFF).

It belongs to the inorganic phosphate transporter (PiT) (TC 2.A.20) family.

It localises to the cell membrane. Potential transporter for phosphate. This Chlamydia pneumoniae (Chlamydophila pneumoniae) protein is Putative phosphate permease CPn_0680/CP_0067/CPj0680/CpB0707.